Reading from the N-terminus, the 549-residue chain is Membrane protein insertase YidC (549 aa).

The chain crosses the membrane as a helical span at residues 9–29; that stretch reads LRLILAIALSFLFIALYSYFF. The span at 37–51 shows a compositional bias: low complexity; sequence TETTKQETTNNHTAT. The interval 37 to 56 is disordered; sequence TETTKQETTNNHTATSPTAS. The next 5 helical transmembrane spans lie at 328–348, 351–371, 417–437, 452–472, and 498–518; these read VIEYGLITFFAKGVFVLLDYL, FVGNWGWAIILLTIIVRIILY, GANPLGGCLPLILQIPVFFAI, WVLWIHDLSIMDPYFILPLLM, and LLPLLFTIFLITFPAGLVLYW.

This sequence belongs to the OXA1/ALB3/YidC family. Type 1 subfamily. Interacts with the Sec translocase complex via SecD. Specifically interacts with transmembrane segments of nascent integral membrane proteins during membrane integration.

Its subcellular location is the cell inner membrane. Required for the insertion and/or proper folding and/or complex formation of integral membrane proteins into the membrane. Involved in integration of membrane proteins that insert both dependently and independently of the Sec translocase complex, as well as at least some lipoproteins. Aids folding of multispanning membrane proteins. The polypeptide is Membrane protein insertase YidC (Helicobacter pylori (strain J99 / ATCC 700824) (Campylobacter pylori J99)).